A 64-amino-acid chain; its full sequence is MPKSKTHSGTAKRFKVSGSGKILRQKAGRRHLLEHKATKVTRRLDGVAVVSKADTPRIKRLLDI.

Over residues 1-15 (MPKSKTHSGTAKRFK) the composition is skewed to basic residues. Residues 1–23 (MPKSKTHSGTAKRFKVSGSGKIL) are disordered.

Belongs to the bacterial ribosomal protein bL35 family.

This chain is Large ribosomal subunit protein bL35, found in Rhodococcus jostii (strain RHA1).